The chain runs to 147 residues: UPF0178 protein AFE_3267 (147 aa).

The protein belongs to the UPF0178 family.

This chain is UPF0178 protein AFE_3267, found in Acidithiobacillus ferrooxidans (strain ATCC 23270 / DSM 14882 / CIP 104768 / NCIMB 8455) (Ferrobacillus ferrooxidans (strain ATCC 23270)).